The chain runs to 346 residues: tRNA N6-adenosine threonylcarbamoyltransferase (346 aa).

Fe cation-binding residues include His-117 and His-121. Substrate-binding positions include Val-139–Gly-143, Asp-172, Gly-185, Asp-189, and Asn-278. Asp-307 contacts Fe cation.

Belongs to the KAE1 / TsaD family. As to quaternary structure, may form a heterodimer with TsaB. The cofactor is Fe(2+).

Its subcellular location is the cytoplasm. The catalysed reaction is L-threonylcarbamoyladenylate + adenosine(37) in tRNA = N(6)-L-threonylcarbamoyladenosine(37) in tRNA + AMP + H(+). In terms of biological role, required for the formation of a threonylcarbamoyl group on adenosine at position 37 (t(6)A37) in tRNAs that read codons beginning with adenine. Is involved in the transfer of the threonylcarbamoyl moiety of threonylcarbamoyl-AMP (TC-AMP) to the N6 group of A37, together with TsaE and TsaB; this reaction does not require ATP in vitro. TsaD likely plays a direct catalytic role in this reaction. The chain is tRNA N6-adenosine threonylcarbamoyltransferase from Bacillus subtilis (strain 168).